The following is a 953-amino-acid chain: Coatomer subunit beta (953 aa).

HEAT repeat units follow at residues 17–54 (DSEPPSEISLKNDLEKGDVKLKTEALKKVIIMILNGEK), 96–131 (QEMILVCDAYRKDLQHPNEFIRGSTLRFLCKLKEAE), 132–168 (LLEPLMPAIRACLEHRHSYVRRNAVLAIYTIYRNFEH), 240–276 (SERARFIRCIYNLLQSSSPAVKYEAAGTLVTLSSAPT), 277–314 (AIKAAAQCYIDLIIKESDNNVKLIVLDRLVELKEHPSH), 316–353 (RVLQDLVMDILRVLSTPDLEVRKKTLQLALDLVSSRNV), and 396–433 (DMAANVIPVLMEFLSDNNEAAAADVLEFVREAIQRFDN).

As to quaternary structure, oligomeric complex that consists of at least the alpha, beta, beta', gamma, delta, epsilon and zeta subunits.

Its subcellular location is the cytoplasm. It localises to the golgi apparatus membrane. It is found in the cytoplasmic vesicle. The protein resides in the COPI-coated vesicle membrane. The coatomer is a cytosolic protein complex that binds to dilysine motifs and reversibly associates with Golgi non-clathrin-coated vesicles, which further mediate biosynthetic protein transport from the ER, via the Golgi up to the trans Golgi network. Coatomer complex is required for budding from Golgi membranes, and is essential for the retrograde Golgi-to-ER transport of dilysine-tagged proteins. The sequence is that of Coatomer subunit beta (COPB1) from Gallus gallus (Chicken).